A 35-amino-acid chain; its full sequence is Photosystem II reaction center protein Y (35 aa).

At 1–4 the chain is on the lumenal side; it reads MDTR. The helical transmembrane segment at 5-23 threads the bilayer; the sequence is LLIVLLPIIAAASWAIYNI. Over 24 to 35 the chain is Stromal; that stretch reads GKILLLQLTKRS.

This sequence belongs to the PsbY family. As to quaternary structure, PSII is composed of 1 copy each of membrane proteins PsbA, PsbB, PsbC, PsbD, PsbE, PsbF, PsbH, PsbI, PsbJ, PsbK, PsbL, PsbM, PsbT, PsbX, PsbY, PsbZ, Psb30/Ycf12, at least 3 peripheral proteins of the oxygen-evolving complex and a large number of cofactors. It forms dimeric complexes.

The protein localises to the plastid. Its subcellular location is the chloroplast thylakoid membrane. Functionally, loosely associated component of the core of photosystem II (PSII), it is not always seen in crystals. PSII is a light-driven water plastoquinone oxidoreductase, using light energy to abstract electrons from H(2)O, generating a proton gradient subsequently used for ATP formation. This Cyanidioschyzon merolae (strain NIES-3377 / 10D) (Unicellular red alga) protein is Photosystem II reaction center protein Y.